A 140-amino-acid chain; its full sequence is Ribosome-binding factor A (140 aa).

A disordered region spans residues 1 to 23; that stretch reads MLRDRNRSGVRGGAEGPSQRQRR.

It belongs to the RbfA family. As to quaternary structure, monomer. Binds 30S ribosomal subunits, but not 50S ribosomal subunits or 70S ribosomes.

It is found in the cytoplasm. One of several proteins that assist in the late maturation steps of the functional core of the 30S ribosomal subunit. Associates with free 30S ribosomal subunits (but not with 30S subunits that are part of 70S ribosomes or polysomes). Required for efficient processing of 16S rRNA. May interact with the 5'-terminal helix region of 16S rRNA. The chain is Ribosome-binding factor A from Acidiphilium cryptum (strain JF-5).